Reading from the N-terminus, the 459-residue chain is Protein U54 (459 aa).

Residues 1-20 (MQPATLQWSSYVLQLRLTTA) form the signal peptide. 5 N-linked (GlcNAc...) asparagine; by host glycosylation sites follow: N76, N100, N281, N321, and N452.

Belongs to the herpesviridae UL82 family.

In Homo sapiens (Human), this protein is Protein U54 (U54).